A 453-amino-acid chain; its full sequence is tRNA modification GTPase MnmE (453 aa).

(6S)-5-formyl-5,6,7,8-tetrahydrofolate-binding residues include R22, E79, and K119. The TrmE-type G domain maps to 215-376 (GMKVVIAGRP…LKLHLKSLMG (162 aa)). N225 contributes to the K(+) binding site. GTP-binding positions include 225 to 230 (NAGKSS), 244 to 250 (TEIAGTT), 269 to 272 (DTAG), and 334 to 337 (NKAD). S229 is a binding site for Mg(2+). K(+)-binding residues include T244, I246, and T249. T250 contributes to the Mg(2+) binding site. A (6S)-5-formyl-5,6,7,8-tetrahydrofolate-binding site is contributed by K453.

It belongs to the TRAFAC class TrmE-Era-EngA-EngB-Septin-like GTPase superfamily. TrmE GTPase family. In terms of assembly, homodimer. Heterotetramer of two MnmE and two MnmG subunits. The cofactor is K(+).

The protein resides in the cytoplasm. In terms of biological role, exhibits a very high intrinsic GTPase hydrolysis rate. Involved in the addition of a carboxymethylaminomethyl (cmnm) group at the wobble position (U34) of certain tRNAs, forming tRNA-cmnm(5)s(2)U34. This is tRNA modification GTPase MnmE from Shewanella putrefaciens (strain CN-32 / ATCC BAA-453).